A 313-amino-acid polypeptide reads, in one-letter code: L-lactate dehydrogenase (313 aa).

NAD(+) is bound by residues V11, D32, R37, Y62, and 76–77; that span reads GV. Residues Q79, R85, and 117–120 contribute to the substrate site; that span reads NPVD. NAD(+)-binding positions include 115–117 and S143; that span reads ASN. 148-151 is a substrate binding site; sequence DTAR. Residues R153 and H168 each coordinate beta-D-fructose 1,6-bisphosphate. H175 (proton acceptor) is an active-site residue. Position 221 is a phosphotyrosine (Y221). A substrate-binding site is contributed by T230.

Belongs to the LDH/MDH superfamily. LDH family. As to quaternary structure, homotetramer.

The protein resides in the cytoplasm. The enzyme catalyses (S)-lactate + NAD(+) = pyruvate + NADH + H(+). It participates in fermentation; pyruvate fermentation to lactate; (S)-lactate from pyruvate: step 1/1. Its activity is regulated as follows. Allosterically activated by fructose 1,6-bisphosphate (FBP). Functionally, catalyzes the conversion of lactate to pyruvate. In Geotalea daltonii (strain DSM 22248 / JCM 15807 / FRC-32) (Geobacter daltonii), this protein is L-lactate dehydrogenase.